Reading from the N-terminus, the 289-residue chain is Geranylgeranyl diphosphate synthase (289 aa).

Isopentenyl diphosphate-binding residues include Arg-43 and His-73. Mg(2+) contacts are provided by Asp-80 and Asp-86. Arg-91 contacts (2E,6E)-farnesyl diphosphate. Arg-92 contacts isopentenyl diphosphate. (2E,6E)-farnesyl diphosphate contacts are provided by Lys-170, Thr-171, and Gln-205.

It belongs to the FPP/GGPP synthase family. Requires Mg(2+) as cofactor.

It catalyses the reaction isopentenyl diphosphate + (2E,6E)-farnesyl diphosphate = (2E,6E,10E)-geranylgeranyl diphosphate + diphosphate. It participates in isoprenoid biosynthesis; geranylgeranyl diphosphate biosynthesis; geranylgeranyl diphosphate from farnesyl diphosphate and isopentenyl diphosphate: step 1/1. Functionally, catalyzes the condensation of farnesyl diphosphate (FPP) and isopentenyl diphosphate (IPP) to yield geranylgeranyl diphosphate (GGPP) needed for biosynthesis of carotenoids and diterpenes. In Rhodobacter capsulatus (strain ATCC BAA-309 / NBRC 16581 / SB1003), this protein is Geranylgeranyl diphosphate synthase (crtE).